The chain runs to 69 residues: Neurotoxin Cex5 (69 aa).

Alanine 1 is a signal peptide. The LCN-type CS-alpha/beta domain maps to 2-67 (KDGYLVSKST…TYPIPGKSCG (66 aa)). Cystine bridges form between cysteine 13–cysteine 66, cysteine 17–cysteine 42, cysteine 26–cysteine 47, and cysteine 30–cysteine 49. Residue cysteine 66 is modified to Cysteine amide. Residues 67–69 (GKK) constitute a propeptide that is removed on maturation.

This sequence belongs to the long (4 C-C) scorpion toxin superfamily. Sodium channel inhibitor family. Beta subfamily. As to expression, expressed by the venom gland.

Its subcellular location is the secreted. Functionally, beta toxins bind voltage-independently at site-4 of sodium channels (Nav) and shift the voltage of activation toward more negative potentials thereby affecting sodium channel activation and promoting spontaneous and repetitive firing. In Centruroides exilicauda (Bark scorpion), this protein is Neurotoxin Cex5.